Reading from the N-terminus, the 203-residue chain is MARFRGSITKVSRRLGIALAPKAEKYLERRPFPPGQHGQGRKGKVSEYALQLREKQKMKYLYGILEKQFRNYYKKAVSQRGVTGDNLVKLLERRFDNVVFRAGFAPSRSGARQLVTHGHLLINGKKVDIPSYIVSPSEVIEFRQRSKNMGAVTDSLNKAPESRIPSWIQVDKANQKAVFLSVPERVEVQEPFNEQLVVELYSK.

The region spanning 93 to 173 (RRFDNVVFRA…IPSWIQVDKA (81 aa)) is the S4 RNA-binding domain.

It belongs to the universal ribosomal protein uS4 family. Part of the 30S ribosomal subunit. Contacts protein S5. The interaction surface between S4 and S5 is involved in control of translational fidelity.

Its function is as follows. One of the primary rRNA binding proteins, it binds directly to 16S rRNA where it nucleates assembly of the body of the 30S subunit. Functionally, with S5 and S12 plays an important role in translational accuracy. This is Small ribosomal subunit protein uS4 from Pelodictyon phaeoclathratiforme (strain DSM 5477 / BU-1).